Reading from the N-terminus, the 341-residue chain is Tetraacyldisaccharide 4'-kinase (341 aa).

Thr-57 to Thr-64 provides a ligand contact to ATP.

The protein belongs to the LpxK family.

The enzyme catalyses a lipid A disaccharide + ATP = a lipid IVA + ADP + H(+). The protein operates within glycolipid biosynthesis; lipid IV(A) biosynthesis; lipid IV(A) from (3R)-3-hydroxytetradecanoyl-[acyl-carrier-protein] and UDP-N-acetyl-alpha-D-glucosamine: step 6/6. Its function is as follows. Transfers the gamma-phosphate of ATP to the 4'-position of a tetraacyldisaccharide 1-phosphate intermediate (termed DS-1-P) to form tetraacyldisaccharide 1,4'-bis-phosphate (lipid IVA). In Maricaulis maris (strain MCS10) (Caulobacter maris), this protein is Tetraacyldisaccharide 4'-kinase.